The following is a 378-amino-acid chain: Ribosomal RNA large subunit methyltransferase G (378 aa).

It belongs to the methyltransferase superfamily. RlmG family.

It is found in the cytoplasm. The enzyme catalyses guanosine(1835) in 23S rRNA + S-adenosyl-L-methionine = N(2)-methylguanosine(1835) in 23S rRNA + S-adenosyl-L-homocysteine + H(+). In terms of biological role, specifically methylates the guanine in position 1835 (m2G1835) of 23S rRNA. In Shigella flexneri, this protein is Ribosomal RNA large subunit methyltransferase G.